Here is a 2283-residue protein sequence, read N- to C-terminus: AT-rich interactive domain-containing protein 1A (2283 aa).

Over residues 1 to 10 the composition is skewed to low complexity; it reads MAAQVAPAAA. Disordered regions lie at residues 1 to 333, 346 to 822, and 979 to 1006; these read MAAQ…PADM, AAAA…LPNA, and ATKM…TTTN. Ala2 carries the N-acetylalanine modification. The segment covering 22–34 has biased composition (basic and acidic residues); the sequence is ELKKAEQQQREEA. Phosphoserine occurs at positions 56 and 77. Over residues 77–93 the composition is skewed to gly residues; the sequence is SNGGGGGGGAGSGGGPG. Composition is skewed to low complexity over residues 128 to 143 and 233 to 266; these read SSSD…AAAA and SSPR…SSSS. A Phosphoserine modification is found at Ser234. Over residues 274-287 the composition is skewed to gly residues; that stretch reads AMGGGGPSAAGGGT. At Thr287 the chain carries Phosphothreonine. The LXXLL signature appears at 296–300; it reads LNQLL. Over residues 296–307 the composition is skewed to polar residues; the sequence is LNQLLTSPSSAR. Ser302 carries the post-translational modification Phosphoserine. Positions 311-328 are enriched in gly residues; that stretch reads GYPGGDYGGGPQDGGAGK. Phosphoserine is present on residues Ser365 and Ser384. Over residues 402 to 427 the composition is skewed to low complexity; the sequence is PYSQQQGPPSGPQQGHGYPGQPYGSQ. Arg431 carries the post-translational modification Asymmetric dimethylarginine. Composition is skewed to polar residues over residues 438-451 and 459-470; these read GRAQ…SYAQ and QGPSAYGQQGQT. Composition is skewed to low complexity over residues 471-547 and 554-596; these read PYYN…QHPQ and QPQA…YSQQ. Ser605 is modified (phosphoserine). Residues 611–622 show a composition bias toward low complexity; sequence SQASSAPSMTSS. The span at 629–638 shows a compositional bias: polar residues; sequence MNLSLQSRPS. A compositionally biased stretch (low complexity) spans 659 to 675; that stretch reads SPGVSTSGISSSQGEQS. A compositionally biased stretch (polar residues) spans 676–686; sequence NPAQSPFSPHT. Residues Ser697, Ser699, Ser703, Ser731, Ser765, and Ser773 each carry the phosphoserine modification. Polar residues-rich tracts occupy residues 731–748 and 756–794; these read SGQS…SSIA and RNPQ…QNSM. A compositionally biased stretch (low complexity) spans 795–822; sequence GSYGPQGSQYGPQGGYPRQPNYNALPNA. The ARID domain occupies 1018–1109; sequence EPERKMWVDR…CLYAFECKIE (92 aa). 2 disordered regions span residues 1114–1484 and 1539–1636; these read PPPD…MMGG and RANH…PPMI. Residues 1142–1155 are compositionally biased toward low complexity; it reads MQGPQTPQSTSSSM. The segment covering 1163 to 1178 has biased composition (pro residues); it reads PPTPASTPHSQIPPLP. Ser1185 carries the post-translational modification Phosphoserine. Residues 1198 to 1220 show a composition bias toward polar residues; that stretch reads PTFQKRNSMTPNPGYQPSMNTSD. At Ser1236 the chain carries Phosphoserine. Arg1277 carries the post-translational modification Omega-N-methylarginine. Positions 1343 to 1368 are enriched in low complexity; that stretch reads QFSTQGTPSSSPFPSQQTTMYQQQQQ. Positions 1369–1388 match the Nuclear localization signal motif; it reads NYKRPMDGTYGPPAKRHEGE. The span at 1395-1426 shows a compositional bias: low complexity; that stretch reads SAGQGQPQQQQLPAAQSQPASQPQAAQPSPQQ. Composition is skewed to polar residues over residues 1427–1436 and 1469–1478; these read DVYNQYSNAY and PGSSAQQNMP. A compositionally biased stretch (pro residues) spans 1555–1579; the sequence is PYGPSAPVPPMTRPPPSNYQPPPSM. Ser1605 bears the Phosphoserine mark. Lys1613 carries the post-translational modification N6-acetyllysine. Positions 1710–1714 match the LXXLL motif; sequence LPGLL. 3 disordered regions span residues 1757 to 1782, 1872 to 1904, and 1917 to 1941; these read PAHT…GVGN, CPTP…PEKR, and SSTL…PFGI. A compositionally biased stretch (acidic residues) spans 1761–1782; the sequence is EEEEEEHLDPKLEEEEEEGVGN. Phosphothreonine occurs at positions 1874 and 1886. A compositionally biased stretch (low complexity) spans 1882-1893; that stretch reads TVEGTPGTTEQE. Lys1903 carries the post-translational modification N6-acetyllysine. Residues 1923 to 1935 show a composition bias toward basic and acidic residues; sequence EGAKSAEATKESS. Residues Ser1927 and Ser1942 each carry the phosphoserine modification. 2 short sequence motifs (LXXLL) span residues 1965–1969 and 2083–2087; these read LCTLL and LDGLL.

In terms of assembly, component of SWI/SNF chromatin remodeling complexes, in some of which it can be mutually exclusive with ARID1B/BAF250B. The canonical complex contains a catalytic subunit (either SMARCA4/BRG1/BAF190A or SMARCA2/BRM/BAF190B) and at least SMARCE1, ACTL6A/BAF53, SMARCC1/BAF155, SMARCC2/BAF170, and SMARCB1/SNF5/BAF47. Other subunits specific to each of the complexes may also be present permitting several possible combinations developmentally and tissue specific. Component of the BAF (SWI/SNF-A) complex, which includes at least actin (ACTB), ARID1A/BAF250A, ARID1B/BAF250B, SMARCA2/BRM, SMARCA4/BRG1/BAF190A, ACTL6A/BAF53, ACTL6B/BAF53B, SMARCE1/BAF57, SMARCC1/BAF155, SMARCC2/BAF170, SMARCB1/SNF5/INI1, and one or more SMARCD1/BAF60A, SMARCD2/BAF60B, or SMARCD3/BAF60C. In muscle cells, the BAF complex also contains DPF3. Component of neural progenitors-specific chromatin remodeling complex (npBAF complex) composed of at least, ARID1A/BAF250A or ARID1B/BAF250B, SMARCD1/BAF60A, SMARCD3/BAF60C, SMARCA2/BRM/BAF190B, SMARCA4/BRG1/BAF190A, SMARCB1/BAF47, SMARCC1/BAF155, SMARCE1/BAF57, SMARCC2/BAF170, PHF10/BAF45A, ACTL6A/BAF53A and actin. Component of neuron-specific chromatin remodeling complex (nBAF complex) composed of at least, ARID1A/BAF250A or ARID1B/BAF250B, SMARCD1/BAF60A, SMARCD3/BAF60C, SMARCA2/BRM/BAF190B, SMARCA4/BRG1/BAF190A, SMARCB1/BAF47, SMARCC1/BAF155, SMARCE1/BAF57, SMARCC2/BAF170, DPF1/BAF45B, DPF3/BAF45C, ACTL6B/BAF53B and actin. Component of a SWI/SNF-like EBAFa complex, at least composed of SMARCA4/BRG1/BAF190A, SMARCB1/BAF47/SNF5, ACTL6A/BAF53A, SMARCE1/BAF57, SMARCD1/BAF60A, SMARCC1/BAF155, SMARCC2/BAF170, BAF250A and MLLT1/ENL. Interacts through its C-terminus with SMARCA2/BRM/BAF190B and SMARCA4/BRG1/BAF190A. Interacts with SMARCC1/BAF155. Interacts with FOS (via bZIP domain and leucine-zipper region), FOSB isoform 1 and 2, FOSL1 and FOSL2. In terms of tissue distribution, widely expressed. Expressed at high levels in the testis.

Its subcellular location is the nucleus. Its function is as follows. Involved in transcriptional activation and repression of select genes by chromatin remodeling (alteration of DNA-nucleosome topology). Component of SWI/SNF chromatin remodeling complexes that carry out key enzymatic activities, changing chromatin structure by altering DNA-histone contacts within a nucleosome in an ATP-dependent manner. Binds DNA non-specifically. Belongs to the neural progenitors-specific chromatin remodeling complex (npBAF complex) and the neuron-specific chromatin remodeling complex (nBAF complex). During neural development a switch from a stem/progenitor to a postmitotic chromatin remodeling mechanism occurs as neurons exit the cell cycle and become committed to their adult state. The transition from proliferating neural stem/progenitor cells to postmitotic neurons requires a switch in subunit composition of the npBAF and nBAF complexes. As neural progenitors exit mitosis and differentiate into neurons, npBAF complexes which contain ACTL6A/BAF53A and PHF10/BAF45A, are exchanged for homologous alternative ACTL6B/BAF53B and DPF1/BAF45B or DPF3/BAF45C subunits in neuron-specific complexes (nBAF). The npBAF complex is essential for the self-renewal/proliferative capacity of the multipotent neural stem cells. The nBAF complex along with CREST plays a role regulating the activity of genes essential for dendrite growth. The chain is AT-rich interactive domain-containing protein 1A (Arid1a) from Mus musculus (Mouse).